The primary structure comprises 308 residues: GTP-binding protein RAD (308 aa).

Residues 1–15 are compositionally biased toward gly residues; sequence MTLNGGSGASGSRGA. The segment at 1–86 is disordered; the sequence is MTLNGGSGAS…SDSLSSGGSG (86 aa). Residue Arg-24 is modified to Omega-N-methylarginine. Position 26 is a phosphoserine (Ser-26). The span at 57–82 shows a compositional bias: low complexity; it reads ATTAAGTRTQGQRLDWPEGSSDSLSS. GTP-binding positions include 98 to 105 and 203 to 206; these read GAPGVGKS and NKSD. The interval 278–297 is calmodulin-binding; it reads AKRFLGRIVARNSRKMAFRA.

The protein belongs to the small GTPase superfamily. RGK family. As to quaternary structure, interacts with Calmodulin preferentially in the inactive, GDP-bound form. Interacts with CAMK2D. Interacts with CACNB2; interaction may be involved in beta-adrenergic regulation of heart rate and contractile force. Interaction with CACNB2 regulates the trafficking of CACNA1C to the cell membrane. Phosphorylation at Ser-26, Ser-39, Ser-273 and Ser-301 may be involved in regulating inhibition of voltage-gated L-type Ca(2+) channels.

The protein localises to the cell membrane. Its function is as follows. May regulate basal voltage-dependent L-type Ca(2+) currents and be required for beta-adrenergic augmentation of Ca(2+) influx in cardiomyocytes, thereby regulating increases in heart rate and contractile force. May play an important role in cardiac antiarrhythmia via the strong suppression of voltage-dependent L-type Ca(2+) currents. Regulates voltage-gated L-type calcium channel subunit alpha-1C trafficking to the cell membrane. Inhibits cardiac hypertrophy through the calmodulin-dependent kinase II (CaMKII) pathway. Inhibits phosphorylation and activation of CAMK2D. This Mus musculus (Mouse) protein is GTP-binding protein RAD (Rrad).